Reading from the N-terminus, the 313-residue chain is Acetaldehyde dehydrogenase (313 aa).

15-18 serves as a coordination point for NAD(+); sequence SGNI. The active-site Acyl-thioester intermediate is Cys-133. Residues 164–172 and Asn-289 each bind NAD(+); that span reads SAGPGTRAN.

It belongs to the acetaldehyde dehydrogenase family.

The catalysed reaction is acetaldehyde + NAD(+) + CoA = acetyl-CoA + NADH + H(+). The chain is Acetaldehyde dehydrogenase from Rhizobium rhizogenes (strain K84 / ATCC BAA-868) (Agrobacterium radiobacter).